The sequence spans 142 residues: Large ribosomal subunit protein uL11 (142 aa).

Belongs to the universal ribosomal protein uL11 family. As to quaternary structure, part of the ribosomal stalk of the 50S ribosomal subunit. Interacts with L10 and the large rRNA to form the base of the stalk. L10 forms an elongated spine to which L12 dimers bind in a sequential fashion forming a multimeric L10(L12)X complex. Post-translationally, one or more lysine residues are methylated.

Functionally, forms part of the ribosomal stalk which helps the ribosome interact with GTP-bound translation factors. The sequence is that of Large ribosomal subunit protein uL11 from Mycoplasma mycoides subsp. mycoides SC (strain CCUG 32753 / NCTC 10114 / PG1).